We begin with the raw amino-acid sequence, 364 residues long: Apelin receptor (364 aa).

Topologically, residues 1–39 (MATDEFSSSTTPSYDYYDYTNESGLPPCDETDWDLSYSL) are extracellular. N-linked (GlcNAc...) asparagine glycosylation is present at N21. Intrachain disulfides connect C28-C288 and C110-C187. A helical membrane pass occupies residues 40 to 60 (LPVFYMIVFVLGLSGNGVVIF). At 61-78 (TVWKAKPKRRSADTYIGN) the chain is on the cytoplasmic side. The chain crosses the membrane as a helical span at residues 79–99 (LALADLAFVVTLPLWATYTAL). The Extracellular portion of the chain corresponds to 100–112 (GFHWPFGSALCKL). Residues 113–133 (SSYLVLLNMFASVFCLTCLSF) form a helical membrane-spanning segment. The Cytoplasmic portion of the chain corresponds to 134-153 (DRYLAIVHSLSSAKLRSRSS). The helical transmembrane segment at 154-174 (ILVSLAVIWLFSGLLALPSLI) threads the bilayer. Topologically, residues 175-201 (LRDTRVEGNNTICDLDFSGVSSKENEN) are extracellular. N-linked (GlcNAc...) asparagine glycosylation occurs at N183. A helical membrane pass occupies residues 202 to 222 (FWIGGLSILTTVPGFLLPLLL). Over 223–250 (MTIFYCFIGGKVTMHFQNLKKEEQKKKR) the chain is Cytoplasmic. A helical membrane pass occupies residues 251–271 (LLKIIITLVVVFAICWLPFHI). The Extracellular portion of the chain corresponds to 272 to 298 (LKTIHFLDLMGFLELSCSTQNIIVSLH). Residues 299–319 (PYATCLAYINSCLNPFLYAFF) traverse the membrane as a helical segment. Residues 320–364 (DLRFRSQCFFFFGFKKALQGHLSNTSSSLSAQTQKSEIHSLATKV) lie on the Cytoplasmic side of the membrane.

This sequence belongs to the G-protein coupled receptor 1 family.

The protein localises to the cell membrane. Functionally, g protein-coupled receptor for peptide hormones apelin (apln) and apelin receptor early endogenous ligand (apela), that plays a role in the regulation of normal cardiovascular function and fluid homeostasis. When acting as apelin receptor, activates both G(i) protein pathway that inhibits adenylate cyclase activity, and the beta-arrestin pathway that promotes internalization of the receptor. Also functions as mechanoreceptor that is activated by pathological stimuli in a G-protein-independent fashion to induce beta-arrestin signaling, hence eliciting cardiac hypertrophy. However, the presence of apelin ligand blunts cardiac hypertrophic induction from APLNR/APJ on response to pathological stimuli. Plays a key role in early development such as gastrulation, blood vessels formation and heart morphogenesis by acting as a receptor for apela hormone, promoting endoderm and mesendoderm cell migration and regulating the migration of cells fated to become myocardial progenitors, respectively. Promotes angioblast migration toward the embryonic midline, i.e. the position of the future vessel formation, during vasculogenesis. May promote sinus venosus (SV)-derived endothelial cells migration into the developing heart to promote coronary blood vessel development. Required for cardiovascular development, particularly for intersomitic vein angiogenesis. Plays also a role in various processes in adults such as regulation of blood vessel formation, blood pressure, heart contractility, and heart failure. Acts upstream of the i/o type of G-alpha proteins in the differentiation of endothelium, erythroid cells, myeloid cells and cardiomyocytes. In Xenopus tropicalis (Western clawed frog), this protein is Apelin receptor (aplnr).